Reading from the N-terminus, the 271-residue chain is tRNA (guanine-N(7)-)-methyltransferase (271 aa).

Residues 1–52 (MSDSHHTPEAASASLRHVRAKGEPRFPDGPKADPAGSHFERRIRSFQPRRSR) are disordered. The segment covering 20–31 (AKGEPRFPDGPK) has biased composition (basic and acidic residues). Positions 93, 118, 145, and 168 each coordinate S-adenosyl-L-methionine. Asp-168 is a catalytic residue. Substrate is bound by residues Lys-172, Asp-204, and 241-244 (TRFE).

This sequence belongs to the class I-like SAM-binding methyltransferase superfamily. TrmB family.

It carries out the reaction guanosine(46) in tRNA + S-adenosyl-L-methionine = N(7)-methylguanosine(46) in tRNA + S-adenosyl-L-homocysteine. It functions in the pathway tRNA modification; N(7)-methylguanine-tRNA biosynthesis. Catalyzes the formation of N(7)-methylguanine at position 46 (m7G46) in tRNA. The chain is tRNA (guanine-N(7)-)-methyltransferase from Streptomyces coelicolor (strain ATCC BAA-471 / A3(2) / M145).